The following is a 293-amino-acid chain: MASLKEIRAKVTSIKSTQKITRAMQMVAASKMRRAQERMEVGRPYADSMRRVISHLVHASSDYKHPYMVNRPVNKVGYIVITSDRGLAGGLNINLFKALTKSIQQYQDQSVQAEFAVIGAKGVSFFKNFGGKVTSAVTDYGDKPTFEQLNSPVQAMLEDYSNGKIDRIYVVYNKFVNAMTQKPTINQLVPLPDSAFAEEESGIQTELSWDYIYEPDIKTLIDELLGRYIESIVYQAVMENIASEQSSRMVAMKAATDNAGDLINDLQLVYNKLRQAAITREISEIVGGAAAVS.

This sequence belongs to the ATPase gamma chain family. As to quaternary structure, F-type ATPases have 2 components, CF(1) - the catalytic core - and CF(0) - the membrane proton channel. CF(1) has five subunits: alpha(3), beta(3), gamma(1), delta(1), epsilon(1). CF(0) has three main subunits: a, b and c.

It localises to the cell inner membrane. Functionally, produces ATP from ADP in the presence of a proton gradient across the membrane. The gamma chain is believed to be important in regulating ATPase activity and the flow of protons through the CF(0) complex. In Psychrobacter arcticus (strain DSM 17307 / VKM B-2377 / 273-4), this protein is ATP synthase gamma chain.